The primary structure comprises 259 residues: Adenosylcobinamide-GDP ribazoletransferase (259 aa).

Transmembrane regions (helical) follow at residues 9–29 (NLFF…WIEV), 43–63 (LVGL…LYWV), 64–84 (SPSI…GGFH), 118–138 (ALAL…LALF), 143–163 (VSLA…SFIF), and 190–210 (ILLA…ALVL).

Belongs to the CobS family. The cofactor is Mg(2+).

It localises to the cell inner membrane. It catalyses the reaction alpha-ribazole + adenosylcob(III)inamide-GDP = adenosylcob(III)alamin + GMP + H(+). It carries out the reaction alpha-ribazole 5'-phosphate + adenosylcob(III)inamide-GDP = adenosylcob(III)alamin 5'-phosphate + GMP + H(+). It functions in the pathway cofactor biosynthesis; adenosylcobalamin biosynthesis; adenosylcobalamin from cob(II)yrinate a,c-diamide: step 7/7. In terms of biological role, joins adenosylcobinamide-GDP and alpha-ribazole to generate adenosylcobalamin (Ado-cobalamin). Also synthesizes adenosylcobalamin 5'-phosphate from adenosylcobinamide-GDP and alpha-ribazole 5'-phosphate. In Shewanella pealeana (strain ATCC 700345 / ANG-SQ1), this protein is Adenosylcobinamide-GDP ribazoletransferase.